The sequence spans 320 residues: MASAKATMGQGEQDHFVLKSGHAMPAVGLGTWRAGSDTAHSVRTAITEAGYRHVDTAAEYGVEKEVGKGLKAAMEAGIDRKDLFVTSKIWCTNLAPERVRPALENTLKDLQLDYIDLYHIHWPFRLKDGAHMPPEAGEVLEFDMEGVWKEMENLVKDGLVKDIGVCNYTVTKLNRLLRSAKIPPAVCQMEMHPGWKNDKIFEACKKHGIHVTAYSPLGSSEKNLAHDPVVEKVANKLNKTPGQVLIKWALQRGTSVIPKSSKDERIKENIQVFGWEIPEEDFKVLCSIKDEKRVLTGEELFVNKTHGPYRSAADVWDHEN.

Tyrosine 60 acts as the Proton donor in catalysis. Histidine 121 is a substrate binding site. 215-269 serves as a coordination point for NADP(+); sequence SPLGSSEKNLAHDPVVEKVANKLNKTPGQVLIKWALQRGTSVIPKSSKDERIKEN.

Belongs to the aldo/keto reductase family.

The enzyme catalyses an alditol + NAD(+) = an aldose + NADH + H(+). It catalyses the reaction an alditol + NADP(+) = an aldose + NADPH + H(+). The chain is Aldose reductase from Hordeum vulgare (Barley).